Consider the following 297-residue polypeptide: UBX domain-containing protein 1 (297 aa).

Residue Ala-2 is modified to N-acetylalanine. One can recognise a UBA domain in the interval 2-42; that stretch reads AELTALESLIEMGFPRGRAEKALALTGNQGIEAAMDWLMEH. The disordered stretch occupies residues 38–212; that stretch reads WLMEHEDDPD…QEPPTKREYD (175 aa). A compositionally biased stretch (acidic residues) spans 42 to 52; it reads HEDDPDVDEPL. The tract at residues 43-297 is interaction with BRCA1; it reads EDDPDVDEPL…VLIVAKKCPS (255 aa). Basic and acidic residues-rich tracts occupy residues 86 to 122 and 137 to 177; these read LTEE…EREK and KLQE…ERAQ. Residues 86-172 are a coiled coil; the sequence is LTEEERQEQT…RVREKIERDK (87 aa). The residue at position 199 (Ser-199) is a Phosphoserine. Ser-200 carries the phosphoserine; by MAPK12 modification. Phosphothreonine is present on residues Thr-207 and Thr-229. One can recognise a UBX domain in the interval 209–291; that stretch reads REYDQCRIQV…GLVPSAVLIV (83 aa). Ser-270 is subject to Phosphoserine.

As to quaternary structure, component of a complex required to couple retrotranslocation, ubiquitination and deglycosylation composed of NGLY1, SAKS1, AMFR, VCP and RAD23B. Interacts with HOMER2. Interacts directly with VCP. Interacts with BRCA1 and BARD1; interaction takes place when BRCA1 is not autoubiquitinated bur is strongly enhanced in the presence of autoubiquitinated BRCA1.

The protein resides in the cytoplasm. In terms of biological role, ubiquitin-binding protein that interacts with the BRCA1-BARD1 heterodimer, and regulates its activity. Specifically binds 'Lys-6'-linked polyubiquitin chains. Interaction with autoubiquitinated BRCA1, leads to inhibit the E3 ubiquitin-protein ligase activity of the BRCA1-BARD1 heterodimer. Component of a complex required to couple deglycosylation and proteasome-mediated degradation of misfolded proteins in the endoplasmic reticulum that are retrotranslocated in the cytosol. This chain is UBX domain-containing protein 1 (Ubxn1), found in Rattus norvegicus (Rat).